The following is a 315-amino-acid chain: Carbamate kinase (315 aa).

Belongs to the carbamate kinase family. Homodimer.

Its subcellular location is the cytoplasm. It catalyses the reaction hydrogencarbonate + NH4(+) + ATP = carbamoyl phosphate + ADP + H2O + H(+). This Thermococcus kodakarensis (strain ATCC BAA-918 / JCM 12380 / KOD1) (Pyrococcus kodakaraensis (strain KOD1)) protein is Carbamate kinase (cpkA).